The primary structure comprises 155 residues: Putative pre-16S rRNA nuclease (155 aa).

The protein belongs to the YqgF nuclease family.

It localises to the cytoplasm. Could be a nuclease involved in processing of the 5'-end of pre-16S rRNA. In Xanthomonas oryzae pv. oryzae (strain MAFF 311018), this protein is Putative pre-16S rRNA nuclease.